Consider the following 231-residue polypeptide: Heptaprenylglyceryl phosphate synthase (231 aa).

Residue Lys-12 participates in sn-glycerol 1-phosphate binding. Residues Asp-14 and Thr-40 each coordinate Mg(2+). Sn-glycerol 1-phosphate is bound by residues 159–164 (YMEYSG), Gly-189, and 209–210 (GN).

The protein belongs to the GGGP/HepGP synthase family. Group I subfamily. Homodimer. The cofactor is Mg(2+).

It catalyses the reaction sn-glycerol 1-phosphate + all-trans-heptaprenyl diphosphate = 3-heptaprenyl-sn-glycero-1-phosphate + diphosphate. It participates in membrane lipid metabolism; glycerophospholipid metabolism. In terms of biological role, prenyltransferase that catalyzes in vivo the transfer of the heptaprenyl moiety of heptaprenyl pyrophosphate (HepPP; 35 carbon atoms) to the C3 hydroxyl of sn-glycerol-1-phosphate (G1P), producing heptaprenylglyceryl phosphate (HepGP). This reaction is an ether-bond-formation step in the biosynthesis of archaea-type G1P-based membrane lipids found in Bacillales. The sequence is that of Heptaprenylglyceryl phosphate synthase from Anoxybacillus flavithermus (strain DSM 21510 / WK1).